Consider the following 709-residue polypeptide: Eukaryotic translation initiation factor 3 subunit B (709 aa).

Residues 1–98 (MSINEEEYLR…LFIQYKNVAD (98 aa)) are sufficient for interaction with HCR1 and TIF32. A sufficient for interaction with PIC8 region spans residues 1–221 (MSINEEEYLR…GIQAWGGADF (221 aa)). In terms of domain architecture, RRM spans 37 to 124 (NYVIVDGAPI…HRLLVNRLSD (88 aa)).

The protein belongs to the eIF-3 subunit B family. Component of the eukaryotic translation initiation factor 3 (eIF-3) complex.

It localises to the cytoplasm. Its function is as follows. RNA-binding component of the eukaryotic translation initiation factor 3 (eIF-3) complex, which is involved in protein synthesis of a specialized repertoire of mRNAs and, together with other initiation factors, stimulates binding of mRNA and methionyl-tRNAi to the 40S ribosome. The eIF-3 complex specifically targets and initiates translation of a subset of mRNAs involved in cell proliferation. This is Eukaryotic translation initiation factor 3 subunit B from Lodderomyces elongisporus (strain ATCC 11503 / CBS 2605 / JCM 1781 / NBRC 1676 / NRRL YB-4239) (Yeast).